The sequence spans 66 residues: Large ribosomal subunit protein bL35 (66 aa).

It belongs to the bacterial ribosomal protein bL35 family.

This Cereibacter sphaeroides (strain ATCC 17029 / ATH 2.4.9) (Rhodobacter sphaeroides) protein is Large ribosomal subunit protein bL35.